A 114-amino-acid polypeptide reads, in one-letter code: Large ribosomal subunit protein uL22 (114 aa).

Belongs to the universal ribosomal protein uL22 family. In terms of assembly, part of the 50S ribosomal subunit.

This protein binds specifically to 23S rRNA; its binding is stimulated by other ribosomal proteins, e.g. L4, L17, and L20. It is important during the early stages of 50S assembly. It makes multiple contacts with different domains of the 23S rRNA in the assembled 50S subunit and ribosome. Functionally, the globular domain of the protein is located near the polypeptide exit tunnel on the outside of the subunit, while an extended beta-hairpin is found that lines the wall of the exit tunnel in the center of the 70S ribosome. This chain is Large ribosomal subunit protein uL22, found in Ehrlichia chaffeensis (strain ATCC CRL-10679 / Arkansas).